The primary structure comprises 302 residues: HTH-type transcriptional regulator ArgP (302 aa).

In terms of domain architecture, HTH lysR-type spans 4–60 (PDYRTLQALDAVIRERGFERAAQKLCITQSAVSQRIKQLENLFGQPLLVRTVPPRPT). The segment at residues 21-40 (FERAAQKLCITQSAVSQRIK) is a DNA-binding region (H-T-H motif).

This sequence belongs to the LysR transcriptional regulatory family. Homodimer.

Controls the transcription of genes involved in arginine and lysine metabolism. The sequence is that of HTH-type transcriptional regulator ArgP from Yersinia pseudotuberculosis serotype O:1b (strain IP 31758).